The primary structure comprises 257 residues: NAD-capped RNA hydrolase NudC (257 aa).

K25 and R69 together coordinate substrate. Zn(2+) contacts are provided by C98 and C101. Residue E111 participates in substrate binding. Residues C116 and C119 each contribute to the Zn(2+) site. Y124 provides a ligand contact to substrate. The Nudix hydrolase domain occupies 125–248; sequence PQIAPCIIVA…TVARRLIEDT (124 aa). A divalent metal cation is bound by residues A158, E174, and E178. Positions 159–180 match the Nudix box motif; sequence GFVEVGETLEQAVAREVMEESG. Residue 192 to 199 coordinates substrate; the sequence is QPWPFPQS. E219 lines the a divalent metal cation pocket. A241 contacts substrate.

It belongs to the Nudix hydrolase family. NudC subfamily. As to quaternary structure, homodimer. The cofactor is Mg(2+). Mn(2+) serves as cofactor. It depends on Zn(2+) as a cofactor.

It carries out the reaction a 5'-end NAD(+)-phospho-ribonucleoside in mRNA + H2O = a 5'-end phospho-adenosine-phospho-ribonucleoside in mRNA + beta-nicotinamide D-ribonucleotide + 2 H(+). The enzyme catalyses NAD(+) + H2O = beta-nicotinamide D-ribonucleotide + AMP + 2 H(+). The catalysed reaction is NADH + H2O = reduced beta-nicotinamide D-ribonucleotide + AMP + 2 H(+). MRNA decapping enzyme that specifically removes the nicotinamide adenine dinucleotide (NAD) cap from a subset of mRNAs by hydrolyzing the diphosphate linkage to produce nicotinamide mononucleotide (NMN) and 5' monophosphate mRNA. The NAD-cap is present at the 5'-end of some mRNAs and stabilizes RNA against 5'-processing. Has preference for mRNAs with a 5'-end purine. Catalyzes the hydrolysis of a broad range of dinucleotide pyrophosphates. The chain is NAD-capped RNA hydrolase NudC from Escherichia coli O157:H7.